A 463-amino-acid polypeptide reads, in one-letter code: tRNA-2-methylthio-N(6)-dimethylallyladenosine synthase (463 aa).

The MTTase N-terminal domain maps to 19–135 (GSYWITTFGC…LESLLNQVDS (117 aa)). [4Fe-4S] cluster contacts are provided by C28, C64, C98, C170, C174, and C177. The region spanning 156–393 (RDSSFCGWVN…NSLVENIAKE (238 aa)) is the Radical SAM core domain. Residues 396 to 463 (QRYKNTSQEI…RPFSLTAKLL (68 aa)) form the TRAM domain.

Belongs to the methylthiotransferase family. MiaB subfamily. Monomer. Requires [4Fe-4S] cluster as cofactor.

The protein localises to the cytoplasm. The catalysed reaction is N(6)-dimethylallyladenosine(37) in tRNA + (sulfur carrier)-SH + AH2 + 2 S-adenosyl-L-methionine = 2-methylsulfanyl-N(6)-dimethylallyladenosine(37) in tRNA + (sulfur carrier)-H + 5'-deoxyadenosine + L-methionine + A + S-adenosyl-L-homocysteine + 2 H(+). Catalyzes the methylthiolation of N6-(dimethylallyl)adenosine (i(6)A), leading to the formation of 2-methylthio-N6-(dimethylallyl)adenosine (ms(2)i(6)A) at position 37 in tRNAs that read codons beginning with uridine. In Prochlorococcus marinus (strain NATL1A), this protein is tRNA-2-methylthio-N(6)-dimethylallyladenosine synthase.